The primary structure comprises 361 residues: Probable dual-specificity RNA methyltransferase RlmN (361 aa).

Glu102 acts as the Proton acceptor in catalysis. The Radical SAM core domain occupies 108 to 344; sequence SGDRLTVCVS…VRWSKGLGAD (237 aa). A disulfide bridge connects residues Cys115 and Cys347. Positions 122, 126, and 129 each coordinate [4Fe-4S] cluster. Residues 169–170, Ser199, 228–230, and Asn304 each bind S-adenosyl-L-methionine; these read GE and SLH. Cys347 acts as the S-methylcysteine intermediate in catalysis.

Belongs to the radical SAM superfamily. RlmN family. [4Fe-4S] cluster is required as a cofactor.

It localises to the cytoplasm. The enzyme catalyses adenosine(2503) in 23S rRNA + 2 reduced [2Fe-2S]-[ferredoxin] + 2 S-adenosyl-L-methionine = 2-methyladenosine(2503) in 23S rRNA + 5'-deoxyadenosine + L-methionine + 2 oxidized [2Fe-2S]-[ferredoxin] + S-adenosyl-L-homocysteine. It catalyses the reaction adenosine(37) in tRNA + 2 reduced [2Fe-2S]-[ferredoxin] + 2 S-adenosyl-L-methionine = 2-methyladenosine(37) in tRNA + 5'-deoxyadenosine + L-methionine + 2 oxidized [2Fe-2S]-[ferredoxin] + S-adenosyl-L-homocysteine. Functionally, specifically methylates position 2 of adenine 2503 in 23S rRNA and position 2 of adenine 37 in tRNAs. The sequence is that of Probable dual-specificity RNA methyltransferase RlmN from Synechococcus elongatus (strain ATCC 33912 / PCC 7942 / FACHB-805) (Anacystis nidulans R2).